The following is a 283-amino-acid chain: tRNA (guanine-N(1)-)-methyltransferase (283 aa).

S-adenosyl-L-methionine contacts are provided by residues Gly113 and 133-138; that span reads IGDYVL.

The protein belongs to the RNA methyltransferase TrmD family. As to quaternary structure, homodimer.

The protein localises to the cytoplasm. It carries out the reaction guanosine(37) in tRNA + S-adenosyl-L-methionine = N(1)-methylguanosine(37) in tRNA + S-adenosyl-L-homocysteine + H(+). Functionally, specifically methylates guanosine-37 in various tRNAs. The sequence is that of tRNA (guanine-N(1)-)-methyltransferase from Parafrankia sp. (strain EAN1pec).